The primary structure comprises 354 residues: Histidinol-phosphate aminotransferase (354 aa).

A compositionally biased stretch (basic and acidic residues) spans 1 to 11; the sequence is MKSFLSDKAKS. A disordered region spans residues 1 to 33; it reads MKSFLSDKAKSIEPYTPGEQPKDKNYIKLNTNE. N6-(pyridoxal phosphate)lysine is present on Lys211.

It belongs to the class-II pyridoxal-phosphate-dependent aminotransferase family. Histidinol-phosphate aminotransferase subfamily. In terms of assembly, homodimer. Pyridoxal 5'-phosphate serves as cofactor.

The enzyme catalyses L-histidinol phosphate + 2-oxoglutarate = 3-(imidazol-4-yl)-2-oxopropyl phosphate + L-glutamate. It functions in the pathway amino-acid biosynthesis; L-histidine biosynthesis; L-histidine from 5-phospho-alpha-D-ribose 1-diphosphate: step 7/9. The polypeptide is Histidinol-phosphate aminotransferase (Brachyspira hyodysenteriae (strain ATCC 49526 / WA1)).